The primary structure comprises 259 residues: DNA-directed RNA polymerase subunit Rpo3 (259 aa).

Belongs to the archaeal Rpo3/eukaryotic RPB3 RNA polymerase subunit family. Part of the RNA polymerase complex.

The protein resides in the cytoplasm. It catalyses the reaction RNA(n) + a ribonucleoside 5'-triphosphate = RNA(n+1) + diphosphate. In terms of biological role, DNA-dependent RNA polymerase (RNAP) catalyzes the transcription of DNA into RNA using the four ribonucleoside triphosphates as substrates. The protein is DNA-directed RNA polymerase subunit Rpo3 of Pyrobaculum arsenaticum (strain DSM 13514 / JCM 11321 / PZ6).